The primary structure comprises 149 residues: Inner membrane protein YidI (149 aa).

The Cytoplasmic segment spans residues M1–K8. A helical membrane pass occupies residues I9 to G31. Topologically, residues P32–K77 are periplasmic. The helical transmembrane segment at I78–G97 threads the bilayer. Over G98–T117 the chain is Cytoplasmic. A helical membrane pass occupies residues L118–F140. Residues S141–V149 are Periplasmic-facing.

The protein resides in the cell inner membrane. In Escherichia coli (strain K12), this protein is Inner membrane protein YidI (yidI).